The sequence spans 474 residues: tRNA-2-methylthio-N(6)-dimethylallyladenosine synthase (474 aa).

Residues 3 to 120 (KKLHIKTWGC…LPDMIDQVRR (118 aa)) form the MTTase N-terminal domain. Residues Cys12, Cys49, Cys83, Cys157, Cys161, and Cys164 each coordinate [4Fe-4S] cluster. The region spanning 143 to 375 (RAEGPTAFVS…QDRITQQAMR (233 aa)) is the Radical SAM core domain. In terms of domain architecture, TRAM spans 378-441 (RHMMGTVQRI…TNSLRGKFIR (64 aa)).

The protein belongs to the methylthiotransferase family. MiaB subfamily. In terms of assembly, monomer. The cofactor is [4Fe-4S] cluster.

Its subcellular location is the cytoplasm. It catalyses the reaction N(6)-dimethylallyladenosine(37) in tRNA + (sulfur carrier)-SH + AH2 + 2 S-adenosyl-L-methionine = 2-methylsulfanyl-N(6)-dimethylallyladenosine(37) in tRNA + (sulfur carrier)-H + 5'-deoxyadenosine + L-methionine + A + S-adenosyl-L-homocysteine + 2 H(+). Its function is as follows. Catalyzes the methylthiolation of N6-(dimethylallyl)adenosine (i(6)A), leading to the formation of 2-methylthio-N6-(dimethylallyl)adenosine (ms(2)i(6)A) at position 37 in tRNAs that read codons beginning with uridine. The sequence is that of tRNA-2-methylthio-N(6)-dimethylallyladenosine synthase from Shewanella sp. (strain ANA-3).